Consider the following 342-residue polypeptide: S-adenosylmethionine:tRNA ribosyltransferase-isomerase (342 aa).

The protein belongs to the QueA family. In terms of assembly, monomer.

It is found in the cytoplasm. It catalyses the reaction 7-aminomethyl-7-carbaguanosine(34) in tRNA + S-adenosyl-L-methionine = epoxyqueuosine(34) in tRNA + adenine + L-methionine + 2 H(+). Its pathway is tRNA modification; tRNA-queuosine biosynthesis. Transfers and isomerizes the ribose moiety from AdoMet to the 7-aminomethyl group of 7-deazaguanine (preQ1-tRNA) to give epoxyqueuosine (oQ-tRNA). The chain is S-adenosylmethionine:tRNA ribosyltransferase-isomerase from Campylobacter jejuni subsp. jejuni serotype O:2 (strain ATCC 700819 / NCTC 11168).